The following is a 732-amino-acid chain: Cullin-3A (732 aa).

In terms of domain architecture, Cullin neddylation spans 662–724; the sequence is DRKPQIEAAI…RDFLERDSTD (63 aa). Residue Lys-676 forms a Glycyl lysine isopeptide (Lys-Gly) (interchain with G-Cter in NEDD8) linkage.

This sequence belongs to the cullin family. Interacts with CSN2 and RBX1A. Interacts with BTB/POZ domain-containing proteins BPM1, BPM2, BPM3, BPM6, BT1, BT2, BT3, BT5, AT1G01640, AT1G21780 and AT5G48510. Interacts with SR1IP1. Interacts with NPR3 and NPR4. Binds to NPR1; this interaction requires NPR3 and NPR4. In terms of processing, neddylated. Deneddylated via its interaction with the COP9 signalosome (CSN) complex.

Its function is as follows. Component of the cullin-RING ubiquitin ligases (CRL), or CUL3-RBX1-BTB protein E3 ligase complexes which mediate the ubiquitination and subsequent proteasomal degradation of target proteins. The functional specificity of the CRL complex depends on the BTB domain-containing protein as the substrate recognition component. Involved in embryo pattern formation and endosperm development. Required for the normal division and organization of the root stem cells and columella root cap cells. Regulates primary root growth by an unknown pathway, but in an ethylene-dependent manner. Functions in distal root patterning, by an ethylene-independent mechanism. Functionally redundant with CUL3B. The polypeptide is Cullin-3A (Arabidopsis thaliana (Mouse-ear cress)).